The primary structure comprises 500 residues: Perfringolysin O (500 aa).

Residues 1-28 (MIRFKKTKLIASIAMALCLFSQPVISFS) form the signal peptide. Beta stranded transmembrane passes span 189 to 202 (KSQI…NAKV), 209 to 218 (VDFNAVANNE), 287 to 296 (SKDVQAAFKA), and 304 to 316 (KNSQ…YENS). The Conserved undecapeptide motif lies at 458–468 (ECTGLAWEWWR). Residues 490–491 (TL) carry the Cholesterol binding motif.

It belongs to the cholesterol-dependent cytolysin family. Modeling based on cryo-EM shows a homooligomeric pore complex containing 38-44 subunits; when inserted in the host membrane.

It is found in the secreted. The protein localises to the host cell membrane. A cholesterol-dependent toxin that causes cytolysis by forming pores in cholesterol-containing host membranes. After binding to target membranes, the protein assembles into a pre-pore complex. A major conformational change leads to insertion in the host membrane and formation of an oligomeric pore complex. Cholesterol is required for binding to host cell membranes, membrane insertion and pore formation; cholesterol binding is mediated by a Thr-Leu pair in the C-terminus. Can be reversibly inactivated by oxidation. In Clostridium perfringens (strain 13 / Type A), this protein is Perfringolysin O (pfo).